We begin with the raw amino-acid sequence, 776 residues long: Semaphorin-4F (776 aa).

The N-terminal stretch at 1-39 (MLARAERPRPGPRPPPVFPFPPPLSLLLLLAILSAPVCG) is a signal peptide. The Extracellular portion of the chain corresponds to 40–665 (RVPRSVPRTS…GPSNRAHTVV (626 aa)). One can recognise a Sema domain in the interval 47–515 (RTSLPISEAD…SHTEVTQVNT (469 aa)). Asn-69 carries an N-linked (GlcNAc...) asparagine glycan. Cys-117 and Cys-127 are oxidised to a cystine. The N-linked (GlcNAc...) asparagine glycan is linked to Asn-138. Disulfide bonds link Cys-145–Cys-154, Cys-278–Cys-389, and Cys-302–Cys-348. Asn-514 carries an N-linked (GlcNAc...) asparagine glycan. Residues 517–568 (NCGRLQSCSECILAQDPVCAWSFRLDACVAHAGEHRGMVQDIESADVSSLCP) form the PSI domain. Intrachain disulfides connect Cys-518-Cys-535, Cys-527-Cys-544, and Cys-592-Cys-633. The region spanning 585–640 (VGHVVLPCSPSSAWASCVWHQPSGVTALTPRRDGLEVVVTPGAMGAYACECQEGGA) is the Ig-like C2-type domain. Residues 666 to 686 (GAGLVGFLLGVLAASLTLLLI) form a helical membrane-spanning segment. Residues 687–776 (GRRQQRRRQR…PLATCDETSI (90 aa)) lie on the Cytoplasmic side of the membrane. The tract at residues 702 to 741 (DKVGLDLGAPPSGTTSYSQDPPSPSPEDERLPLALGKRGS) is disordered. Phosphoserine occurs at positions 724 and 726. The short motif at 774–776 (TSI) is the PDZ-binding element.

This sequence belongs to the semaphorin family. In terms of assembly, interacts (via PDZ-binding motif) with DLG4/SAP90 (via PDZ domain 2); this interaction may promote translocation of DLG4/SAP90 to the membrane. In terms of tissue distribution, expressed at low levels in the developing embryo. Expressed at high levels in the lung and adult central nervous system, including the dorsal root ganglia.

It is found in the cell membrane. Its subcellular location is the postsynaptic density. The protein resides in the perikaryon. It localises to the cell projection. The protein localises to the dendrite. Its function is as follows. Probable cell surface receptor that regulates oligodendroglial precursor cell migration. Might also regulate differentiation of oligodendroglial precursor cells. Has growth cone collapse activity against retinal ganglion-cell axons. This is Semaphorin-4F (Sema4f) from Rattus norvegicus (Rat).